A 332-amino-acid polypeptide reads, in one-letter code: Cell division protein ZipA (332 aa).

Over 1 to 6 (MMQDLR) the chain is Periplasmic. A helical transmembrane segment spans residues 7-27 (LILIVVGAIAIIALLLHGLWT). Topologically, residues 28–332 (SRKERSSLFR…RLREVLENNA (305 aa)) are cytoplasmic. Basic and acidic residues-rich tracts occupy residues 34–51 (SLFR…REQS) and 61–72 (GEVRVRSAHPED). A disordered region spans residues 34–184 (SLFRDRPAKR…PAVAHEPQPA (151 aa)). A compositionally biased stretch (low complexity) spans 98–107 (PAPRAVQPAA). Acidic residues predominate over residues 121–136 (DDILLDNYAQEEDDEP). Residues 155 to 171 (PAAEPAFHAEPAHQPQP) show a composition bias toward low complexity.

This sequence belongs to the ZipA family. As to quaternary structure, interacts with FtsZ via their C-terminal domains.

It is found in the cell inner membrane. Functionally, essential cell division protein that stabilizes the FtsZ protofilaments by cross-linking them and that serves as a cytoplasmic membrane anchor for the Z ring. Also required for the recruitment to the septal ring of downstream cell division proteins. The polypeptide is Cell division protein ZipA (Serratia proteamaculans (strain 568)).